We begin with the raw amino-acid sequence, 77 residues long: Dermaseptin-B9 (77 aa).

An N-terminal signal peptide occupies residues 1 to 22; the sequence is MAFLKKSLFLVLFLGLVSLSVC. 2 propeptides span residues 23-43 and 76-77; these read EEEK…QSEE and EQ.

It belongs to the frog skin active peptide (FSAP) family. Dermaseptin subfamily. In terms of tissue distribution, expressed by the skin glands.

The protein localises to the secreted. In terms of biological role, has antimicrobial activity. Exhibits a bactericidal activity towards several species of mollicutes, firmicutes and gracilicutes. This peptide is membranotropic and it efficiently depolarizes the plasma membrane. This is Dermaseptin-B9 (DRG3) from Phyllomedusa bicolor (Two-colored leaf frog).